We begin with the raw amino-acid sequence, 402 residues long: Multidrug resistance protein MdtH (402 aa).

11 helical membrane passes run 13 to 33 (YFLLVDNMLVVLGFFVVFPLI), 34 to 54 (SIRFVDQMGWAALMVGIALGL), 99 to 116 (PWVLWLSCILSGLGGTLF), 139 to 159 (LLMMQDSAGAVIGALLGSWLL), 165 to 185 (LVCSAGAALFIACAAFNAWYL), 214 to 234 (VLTLTGYYMLAVQVMLMLPIM), 243 to 263 (AAVKWMYAIEATISLTLLYPI), 277 to 297 (LMAGLLVMTLAMLPIGMTSSL), 300 to 320 (LFTLICLFYIGSIIAEPARET), 340 to 360 (LGLAFGGALGYAGGGWLFDAG), and 368 to 388 (LPWLMLGAIGFITFLALWWQF).

This sequence belongs to the major facilitator superfamily. DHA1 family. MdtH (TC 2.A.1.2.21) subfamily.

The protein resides in the cell inner membrane. This chain is Multidrug resistance protein MdtH, found in Klebsiella pneumoniae (strain 342).